The primary structure comprises 593 residues: MHFSVRLSLLLTLASSLPLVSAIPQHEDQAYTFPSPGRSATANTDPVLEVGRETQRTPSAWTRLRDSLVESVWGLPQRKEGGEWRTRNQVTTASRAPATLQARYGEDVVLRFTIKTQEEVKALVEASNILFLDVWGSHDDWVDIRLSRDVIPSLLGLLPPSLQSSHVPLIRDLAQTIYESYPKTNPSSPSQQGPTTRRFSPSASTSKTKPQETKNIFFQDYQPLSVLLPWMRLLVSMFSSHATLISVGTTAEGRDIPALRVGVHPTNNAQQAPRRRTIVISGGAHAREWISVSTVSYIAYSFITGYGKSRSITKLLEQFDYVFIPTVNPDGYAYTFSTDRLWRKNRQQTSLSFCPGIDLDHSWGYEWDGNATRSNPCSENYAGDQPFEAIEAREIATWARKEVTVNNVQFVAFVDLHSYSQQILYPYGHSCAHLPANLENLEELGAGLAKAIRKTSRENYDVKAACRGIVASSMGDKDADEAVTSSALESTAGSALDWFYHDMDVRFSYQIKLRDRGSYGFLLPREQIVPTGKEIYRAMVAMGKFLVSPHILTGDLNGPHAAEETQNYDDDFEEDEAEEDSDVFRAQGDDMSS.

The first 22 residues, 1–22, serve as a signal peptide directing secretion; the sequence is MHFSVRLSLLLTLASSLPLVSA. The propeptide occupies 23 to 184; the sequence is IPQHEDQAYT…QTIYESYPKT (162 aa). A disordered region spans residues 180-210; it reads SYPKTNPSSPSQQGPTTRRFSPSASTSKTKP. The segment covering 182 to 210 has biased composition (polar residues); it reads PKTNPSSPSQQGPTTRRFSPSASTSKTKP. The Peptidase M14 domain occupies 220–546; it reads DYQPLSVLLP…RAMVAMGKFL (327 aa). Zn(2+)-binding residues include H285 and E288. Substrate is bound by residues 285 to 288, R343, and 360 to 361; these read HARE and DH. A disulfide bond links C354 and C377. A glycan (N-linked (GlcNAc...) asparagine) is linked at N370. H417 contacts Zn(2+). Substrate is bound at residue 418–419; that stretch reads SY. The segment at 557-593 is disordered; sequence NGPHAAEETQNYDDDFEEDEAEEDSDVFRAQGDDMSS. A compositionally biased stretch (acidic residues) spans 566 to 581; the sequence is QNYDDDFEEDEAEEDS.

Belongs to the peptidase M14 family. The cofactor is Zn(2+).

It localises to the vacuole. It is found in the secreted. In terms of biological role, inactive carboxypeptidase that may play a role in cell wall organization and biogenesis. This Arthroderma gypseum (strain ATCC MYA-4604 / CBS 118893) (Microsporum gypseum) protein is Inactive metallocarboxypeptidase ECM14 (ECM14).